Reading from the N-terminus, the 858-residue chain is Volume-regulated anion channel subunit LRRC8D (858 aa).

Residues 1–22 (MFTLAEVASLNDIQPTYRILKP) lie on the Cytoplasmic side of the membrane. A helical transmembrane segment spans residues 23–48 (WWDVFMDYLAVVMLMVAIFAGTMQLT). Over 49-163 (KDQVVCLPVL…YHLALPWYSK (115 aa)) the chain is Extracellular. An intrachain disulfide couples C54 to C354. Residues 164–182 (YFPYLALIHTIILMVSSNF) traverse the membrane as a helical segment. The Cytoplasmic portion of the chain corresponds to 183-308 (WFKYPKTCSK…EDSDLIYKLY (126 aa)). The segment at 221–251 (SEENKQRITGAQTLPKHVSTSSDEGSPSAST) is disordered. Over residues 227–251 (RITGAQTLPKHVSTSSDEGSPSAST) the composition is skewed to polar residues. Residues S241, S242, and S246 each carry the phosphoserine modification. Residues 309-328 (VVQTVIKTAKFIFILCYTAN) form a helical membrane-spanning segment. At 329-360 (FVNAISFEHVCKPKVEHLIGYEVFECTHNMAY) the chain is on the extracellular side. Residues 361–386 (MLKKLLISYISIICVYGFICLYTLFW) traverse the membrane as a helical segment. The Cytoplasmic segment spans residues 387 to 858 (LFRIPLKEYS…DINIPFANGI (472 aa)). LRR repeat units follow at residues 514-534 (NLQE…AFSF), 538-559 (HLRC…VYLL), 561-582 (NLRE…IGLE), 589-609 (HLKI…ITDV), 612-632 (HLTK…NSLK), 636-657 (NVAE…IFSL), 659-680 (NLQE…ISFQ), 684-705 (RLTC…ITHV), 707-728 (NLES…VFSL), 730-751 (KLRC…IGLL), 753-774 (NLQH…LFKC), 776-797 (KLRT…VGQL), and 799-820 (QLTQ…LGQC).

The protein belongs to the LRRC8 family. As to quaternary structure, heterohexamer; oligomerizes with other LRRC8 proteins (LRRC8A, LRRC8B, LRRC8C and/or LRRC8E) to form a heterohexamer. In vivo, the subunit composition may depend primarily on expression levels, and heterooligomeric channels containing various proportions of the different LRRC8 proteins may coexist.

It is found in the cell membrane. The protein resides in the endoplasmic reticulum membrane. The enzyme catalyses chloride(in) = chloride(out). It catalyses the reaction iodide(out) = iodide(in). It carries out the reaction taurine(out) = taurine(in). Functionally, non-essential component of the volume-regulated anion channel (VRAC, also named VSOAC channel), an anion channel required to maintain a constant cell volume in response to extracellular or intracellular osmotic changes. The VRAC channel conducts iodide better than chloride and can also conduct organic osmolytes like taurine. Plays a redundant role in the efflux of amino acids, such as aspartate, in response to osmotic stress. LRRC8A and LRRC8D are required for the uptake of the drug cisplatin. Channel activity requires LRRC8A plus at least one other family member (LRRC8B, LRRC8C, LRRC8D or LRRC8E); channel characteristics depend on the precise subunit composition. Also acts as a regulator of glucose-sensing in pancreatic beta cells: VRAC currents, generated in response to hypotonicity- or glucose-induced beta cell swelling, depolarize cells, thereby causing electrical excitation, leading to increase glucose sensitivity and insulin secretion. VRAC channels containing LRRC8D inhibit transport of immunoreactive cyclic dinucleotide GMP-AMP (2'-3'-cGAMP), an immune messenger produced in response to DNA virus in the cytosol. Mediates the import of the antibiotic blasticidin-S into the cell. The protein is Volume-regulated anion channel subunit LRRC8D of Homo sapiens (Human).